The sequence spans 351 residues: tRNA pseudouridine synthase D (351 aa).

The active-site Nucleophile is aspartate 96. The TRUD domain maps to 174–304; that stretch reads GAPNYFGPQR…MKPERRPLVA (131 aa). Residues 244–268 are disordered; it reads VLPGEPEPSGAGPTGPLWGDGGTLA.

Belongs to the pseudouridine synthase TruD family.

The enzyme catalyses uridine(13) in tRNA = pseudouridine(13) in tRNA. Functionally, responsible for synthesis of pseudouridine from uracil-13 in transfer RNAs. This Marinobacter nauticus (strain ATCC 700491 / DSM 11845 / VT8) (Marinobacter aquaeolei) protein is tRNA pseudouridine synthase D.